A 573-amino-acid polypeptide reads, in one-letter code: 60 kDa heat shock protein, mitochondrial (573 aa).

A mitochondrion-targeting transit peptide spans 1-26 (MLRLPTVLRQMRPVSRALAPHLTRAY). Lys-31 carries the post-translational modification N6-succinyllysine. Phosphoserine is present on residues Ser-67 and Ser-70. Lys-75 contacts ATP. Lys-75 carries the post-translational modification N6-acetyllysine. N6-acetyllysine; alternate is present on Lys-82. Lys-82 is subject to N6-succinyllysine; alternate. Residue Lys-87 is modified to N6-acetyllysine. A Phosphotyrosine modification is found at Tyr-90. The residue at position 91 (Lys-91) is an N6-acetyllysine. 111–115 (DGTTT) serves as a coordination point for ATP. Residue Lys-125 is modified to N6-acetyllysine; alternate. At Lys-125 the chain carries N6-succinyllysine; alternate. N6-acetyllysine is present on Lys-130. Lys-133 bears the N6-acetyllysine; alternate mark. Lys-133 carries the post-translational modification N6-succinyllysine; alternate. Lys-133 bears the N6-malonyllysine; alternate mark. Lys-156 bears the N6-acetyllysine mark. N6-acetyllysine; alternate occurs at positions 191, 202, 205, 218, and 236. N6-succinyllysine; alternate is present on residues Lys-191, Lys-202, Lys-205, Lys-218, and Lys-236. Position 249 is an N6-acetyllysine (Lys-249). Position 250 is an N6-acetyllysine; alternate (Lys-250). Position 250 is an N6-succinyllysine; alternate (Lys-250). N6-acetyllysine is present on residues Lys-269 and Lys-292. Lys-301 is subject to N6-succinyllysine. Lys-314 carries the post-translational modification N6-acetyllysine. Lys-352 carries the N6-acetyllysine; alternate modification. Lys-352 is subject to N6-succinyllysine; alternate. Residues Lys-359 and Lys-389 each carry the N6-acetyllysine modification. At Lys-396 the chain carries N6-acetyllysine; alternate. N6-succinyllysine; alternate is present on Lys-396. Ser-410 carries the phosphoserine modification. Gly-440 is a binding site for ATP. The residue at position 455 (Lys-455) is an N6-acetyllysine; alternate. An N6-succinyllysine; alternate modification is found at Lys-455. Lys-469 carries the N6-acetyllysine modification. Lys-481 bears the N6-acetyllysine; alternate mark. The residue at position 481 (Lys-481) is an N6-succinyllysine; alternate. At Ser-488 the chain carries Phosphoserine. Residue Asp-520 participates in ATP binding. Lys-551 is covalently cross-linked (Glycyl lysine isopeptide (Lys-Gly) (interchain with G-Cter in SUMO2)).

This sequence belongs to the chaperonin (HSP60) family. As to quaternary structure, homoheptamer arranged in a ring structure. The functional units of these chaperonins consist of heptameric rings of the large subunit Hsp60, which function as a back-to-back double ring. Interacts with 2 heptameric Hsp10 rings to form the symmetrical football complex. Interacts with HRAS. Interacts with ATAD3A. Interacts with ETFBKMT and EEF1AKMT3. Interacts with MFHAS1.

The protein resides in the mitochondrion matrix. It catalyses the reaction ATP + H2O + a folded polypeptide = ADP + phosphate + an unfolded polypeptide.. In terms of biological role, chaperonin implicated in mitochondrial protein import and macromolecular assembly. Together with Hsp10, facilitates the correct folding of imported proteins. May also prevent misfolding and promote the refolding and proper assembly of unfolded polypeptides generated under stress conditions in the mitochondrial matrix. The functional units of these chaperonins consist of heptameric rings of the large subunit Hsp60, which function as a back-to-back double ring. In a cyclic reaction, Hsp60 ring complexes bind one unfolded substrate protein per ring, followed by the binding of ATP and association with 2 heptameric rings of the co-chaperonin Hsp10. This leads to sequestration of the substrate protein in the inner cavity of Hsp60 where, for a certain period of time, it can fold undisturbed by other cell components. Synchronous hydrolysis of ATP in all Hsp60 subunits results in the dissociation of the chaperonin rings and the release of ADP and the folded substrate protein. In Cricetulus griseus (Chinese hamster), this protein is 60 kDa heat shock protein, mitochondrial (HSPD1).